Here is a 1616-residue protein sequence, read N- to C-terminus: S-layer-related protein (1616 aa).

The signal sequence occupies residues 1–30 (MKSLLRKWNGMMIIALVISLLTPAWGKASA). Positions 1115 to 1185 (VKALKLDRGT…GSGTVQATYE (71 aa)) constitute a BIG2 domain. Disordered regions lie at residues 1191 to 1244 (ARVS…DGRN), 1372 to 1455 (NKRN…GRAR), 1523 to 1554 (ARGR…REAG), and 1585 to 1616 (FAGG…ARPC). Residues 1199-1225 (STGGGSDTGSGTGSGSGGGSAGGGGTA) show a composition bias toward gly residues. Positions 1372-1387 (NKRNRRLRKLRPKNRK) are enriched in basic residues. A compositionally biased stretch (low complexity) spans 1406–1416 (PPECSASCPPA). The region spanning 1438 to 1502 (WSPPRSASPT…ALDPAPAAAD (65 aa)) is the SLH domain. Basic and acidic residues predominate over residues 1536–1554 (RGADTRTDERDAHARREAG). Positions 1594-1616 (GRTRGRTLRARPARLPVRKARPC) are enriched in basic residues.

Its subcellular location is the secreted. The protein resides in the cell wall. It is found in the S-layer. In terms of biological role, the S-layer is a paracrystalline mono-layered assembly of proteins which coats the surface of bacteria. May play a role in the export of butirosin from the organism. This Niallia circulans (Bacillus circulans) protein is S-layer-related protein (butB).